The chain runs to 268 residues: Orotidine 5'-phosphate decarboxylase (268 aa).

Substrate is bound by residues Asp-39, Lys-61–His-63, Asp-93–Thr-102, Tyr-219, and Arg-237. The Proton donor role is filled by Lys-95.

It belongs to the OMP decarboxylase family.

It catalyses the reaction orotidine 5'-phosphate + H(+) = UMP + CO2. It participates in pyrimidine metabolism; UMP biosynthesis via de novo pathway; UMP from orotate: step 2/2. This chain is Orotidine 5'-phosphate decarboxylase (URA3), found in Pachysolen tannophilus (Yeast).